The following is a 348-amino-acid chain: Anthranilate phosphoribosyltransferase (348 aa).

Residues G80, 83 to 84, T88, 90 to 93, 108 to 116, and S120 contribute to the 5-phospho-alpha-D-ribose 1-diphosphate site; these read GD, NVST, and KHGNRSVSS. G80 lines the anthranilate pocket. S92 is a binding site for Mg(2+). N111 provides a ligand contact to anthranilate. Position 166 (R166) interacts with anthranilate. Mg(2+)-binding residues include D224 and E225.

Belongs to the anthranilate phosphoribosyltransferase family. In terms of assembly, homodimer. Mg(2+) is required as a cofactor.

It catalyses the reaction N-(5-phospho-beta-D-ribosyl)anthranilate + diphosphate = 5-phospho-alpha-D-ribose 1-diphosphate + anthranilate. Its pathway is amino-acid biosynthesis; L-tryptophan biosynthesis; L-tryptophan from chorismate: step 2/5. Its function is as follows. Catalyzes the transfer of the phosphoribosyl group of 5-phosphorylribose-1-pyrophosphate (PRPP) to anthranilate to yield N-(5'-phosphoribosyl)-anthranilate (PRA). In Sorangium cellulosum (strain So ce56) (Polyangium cellulosum (strain So ce56)), this protein is Anthranilate phosphoribosyltransferase.